A 1002-amino-acid chain; its full sequence is Mitogen-activated protein kinase kinase kinase 21 (1002 aa).

The interval Met1–Ser26 is disordered. The SH3 domain occupies Thr24–Pro88. Residues Leu110–Leu390 enclose the Protein kinase domain. Residues Ile116–Val124 and Lys137 contribute to the ATP site. Asp247 (proton acceptor) is an active-site residue. Thr283 bears the Phosphothreonine; by autocatalysis mark. Ser287 bears the Phosphoserine; by autocatalysis and MAP4K1 mark. Leucine-zipper regions lie at residues Ile409–Leu430 and Leu444–Leu466. Disordered regions lie at residues Thr508 to Ser531, Gly574 to Trp604, His640 to Pro689, Ala721 to Ser778, Leu797 to Glu823, and Gln878 to Ala899. Phosphoserine occurs at positions 512, 527, and 531. Thr576 carries the post-translational modification Phosphothreonine. Residues Thr584–Pro596 show a composition bias toward basic and acidic residues. Ser598 is modified (phosphoserine). Over residues Asp661–Ser677 the composition is skewed to basic and acidic residues. 2 stretches are compositionally biased toward low complexity: residues Gln740–Ala758 and Ser766–Ser778.

Belongs to the protein kinase superfamily. STE Ser/Thr protein kinase family. MAP kinase kinase kinase subfamily. Homodimer. Interacts with TLR4. The cofactor is Mg(2+). Post-translationally, autophosphorylation on serine and threonine residues within the activation loop plays a role in enzyme activation.

It carries out the reaction L-seryl-[protein] + ATP = O-phospho-L-seryl-[protein] + ADP + H(+). The catalysed reaction is L-threonyl-[protein] + ATP = O-phospho-L-threonyl-[protein] + ADP + H(+). With respect to regulation, homodimerization via the leucine zipper domains is required for autophosphorylation and subsequent activation. Functionally, negative regulator of TLR4 signaling. Does not activate JNK1/MAPK8 pathway, p38/MAPK14, nor ERK2/MAPK1 pathways. This chain is Mitogen-activated protein kinase kinase kinase 21 (Map3k21), found in Mus musculus (Mouse).